Here is a 1849-residue protein sequence, read N- to C-terminus: Mitogen-activated protein kinase kinase kinase mkh1 (1849 aa).

The Protein kinase domain occupies 1556-1825 (WFKGQLIGKG…TKLLAEHPFC (270 aa)). ATP-binding positions include 1562–1570 (IGKGTYGRV) and Lys-1585. The active-site Proton acceptor is Asp-1686.

Belongs to the protein kinase superfamily. STE Ser/Thr protein kinase family. MAP kinase kinase kinase subfamily.

The catalysed reaction is L-seryl-[protein] + ATP = O-phospho-L-seryl-[protein] + ADP + H(+). It catalyses the reaction L-threonyl-[protein] + ATP = O-phospho-L-threonyl-[protein] + ADP + H(+). Its function is as follows. Mitogen-activated protein kinase kinase kinase, part of the mkh1-mkk1-spm1 MAPK cascade that regulates vegetative growth, conidial formation, colony surface hydrophobicity, osmotic stress, cell wall integrity maintenance, carbon and nitrogen source utilization, chitin distribution, septa formation, and pathogenicity. In Cytospora mali (Apple Valsa canker fungus), this protein is Mitogen-activated protein kinase kinase kinase mkh1.